The following is a 422-amino-acid chain: MLDMKFIRENIDETERRLATRGESCTLGGFRELDQKRLALLKESEALKALRNSVSDEIARIKDKSQAQDKILQMREVSQKIKGMDDELKQVDEALQGILLTVPNLPDPATPVGKSENDNVEIRKWGTPGSYGFTPKPHWEIGEELGILDFECGAKLTGARFTLSRGAGARMERALISFMLDLHTASHGYLEVLPPFMVNRDSMTGTGQLPKFEEDLFKMTDPEYFLIPTAEVPVTNIHRGEILKKSDLPIRYAAYTPCFRREAGSYGKDTRGLIRQHQFNKVELVKFSHPSQSAEELEKLTADAEKVLQLLELPYRVMALCSADIGFSAARTYDLEVWLPGQNCYREISSCSCFGDFQARRANIRFREEEKSKPEFVHTLNGSGLAVGRTLVAILENYQQEDGSVVIPQALRPYMGGLERIQ.

229-231 (TAE) provides a ligand contact to L-serine. Residue 260 to 262 (RRE) coordinates ATP. Glu-283 contacts L-serine. 347 to 350 (EISS) serves as a coordination point for ATP. L-serine is bound at residue Ser-383.

This sequence belongs to the class-II aminoacyl-tRNA synthetase family. Type-1 seryl-tRNA synthetase subfamily. Homodimer. The tRNA molecule binds across the dimer.

The protein resides in the cytoplasm. The enzyme catalyses tRNA(Ser) + L-serine + ATP = L-seryl-tRNA(Ser) + AMP + diphosphate + H(+). It carries out the reaction tRNA(Sec) + L-serine + ATP = L-seryl-tRNA(Sec) + AMP + diphosphate + H(+). The protein operates within aminoacyl-tRNA biosynthesis; selenocysteinyl-tRNA(Sec) biosynthesis; L-seryl-tRNA(Sec) from L-serine and tRNA(Sec): step 1/1. Its function is as follows. Catalyzes the attachment of serine to tRNA(Ser). Is also able to aminoacylate tRNA(Sec) with serine, to form the misacylated tRNA L-seryl-tRNA(Sec), which will be further converted into selenocysteinyl-tRNA(Sec). The sequence is that of Serine--tRNA ligase from Pelobacter propionicus (strain DSM 2379 / NBRC 103807 / OttBd1).